Consider the following 108-residue polypeptide: UPF0102 protein Sfri_0388 (108 aa).

It belongs to the UPF0102 family.

The chain is UPF0102 protein Sfri_0388 from Shewanella frigidimarina (strain NCIMB 400).